The primary structure comprises 370 residues: MGLWALLPSWVSTTLLLALTALPAALAANSSGRWWGIVNIASSTNLLTDSKSLQLVLEPSLQLLSRKQRRLIRQNPGILHSVSGGLQSAVRECKWQFRNRRWNCPTAPGPHLFGKIVNRGCRETAFIFAITSAGVTHSVARSCSEGSIESCTCDYRRRGPGGPDWHWGGCSDNIDFGRLFGREFVDSGEKGRDLRFLMNLHNNEAGRTTVFSEMRQECKCHGMSGSCTVRTCWMRLPTLRAVGDVLRDRFDGASRVLYGNRGSNRASRAELLRLEPEDPAHKPPSPHDLVYFEKSPNFCTYSGRLGTAGTAGRACNSSSPALDGCELLCCGRGHRTRTQRVTERCNCTFHWCCHVSCRNCTHTRVLHECL.

Residues 1 to 27 (MGLWALLPSWVSTTLLLALTALPAALA) form the signal peptide. A glycan (N-linked (GlcNAc...) asparagine) is linked at Asn-29. Disulfide bonds link Cys-93/Cys-104, Cys-143/Cys-151, Cys-153/Cys-170, Cys-218/Cys-232, Cys-220/Cys-227, Cys-299/Cys-330, Cys-315/Cys-325, Cys-329/Cys-369, Cys-345/Cys-360, Cys-347/Cys-357, and Cys-352/Cys-353. Residue Ser-224 is the site of O-palmitoleoyl serine; by PORCN attachment. N-linked (GlcNAc...) asparagine glycans are attached at residues Asn-316 and Asn-346. The N-linked (GlcNAc...) asparagine glycan is linked to Asn-359.

This sequence belongs to the Wnt family. In terms of assembly, forms a soluble 1:1 complex with AFM; this prevents oligomerization and is required for prolonged biological activity. The complex with AFM may represent the physiological form in body fluids. Interacts with PORCN. Interacts with RSPO1, RSPO2 and RSPO3. Interacts with WLS. In terms of processing, palmitoleoylation is required for efficient binding to frizzled receptors. Palmitoleoylation is necessary for proper trafficking to cell surface. Depalmitoleoylated by NOTUM, leading to inhibit Wnt signaling pathway. As to expression, testis and mid-gestational embryos. In the testis, detected only in postmeiotic germ cells undergoing differentiation from round spermatids into mature spermatozoa. In the embryos, expression is restricted to the developing CNS in regions of the neural tube other than the telencephalon. Expressed in osteoblast; expression levels increase with advancing osteoblast differentiation. Expressed in the brain, femur, spleen, and hematopoietic bone marrow.

It localises to the secreted. Its subcellular location is the extracellular space. The protein resides in the extracellular matrix. Functionally, ligand for members of the frizzled family of seven transmembrane receptors. Acts in the canonical Wnt signaling pathway by promoting beta-catenin-dependent transcriptional activation. In some developmental processes, is also a ligand for the coreceptor RYK, thus triggering Wnt signaling. Plays an essential role in the development of the embryonic brain and central nervous system (CNS). Has a role in osteoblast function, bone development and bone homeostasis. The chain is Proto-oncogene Wnt-1 (Wnt1) from Mus musculus (Mouse).